The sequence spans 765 residues: Putative chloride channel-like protein CLC-g (765 aa).

12 helical membrane-spanning segments follow: residues 67-87 (VFMKWLLCFCIGIIVSLIGFA), 116-136 (FVVFSVTNLILTLFASVITAF), 167-187 (LIIKIIGNISAVSASLLIGKA), 190-210 (MVHTGACVASILGQGGSKRYR), 232-252 (GAAAGIAASFRAPVGGVLFAL), 262-282 (ALLWRIFFSTAVVAIVLRALI), 315-335 (VLPVLLLGVVGGILGSLYNFL), 355-375 (ILLACAISIFTSCLLFGLPFL), 438-458 (FSVLVFFVTCFFLSIFSYGIV), 462-482 (GLFVPVIVTGASYGRFVGMLL), 494-514 (AVLGAASFLGGTMRMTVSTCV), and 515-535 (ILLELTNNLLLLPMMMVVLLI). A CBS 1 domain is found at 568–640 (MRQLLVGDVV…LLKKRVFMPS (73 aa)). Phosphoserine is present on Ser646. Positions 687–748 (FSNASPYTVV…PEHILGLHPS (62 aa)) constitute a CBS 2 domain. The helical transmembrane segment at 715–735 (HLLVIPKTSNRPPVVGILTRH) threads the bilayer.

This sequence belongs to the chloride channel (TC 2.A.49) family. In terms of assembly, homodimer. Interacts with PP2A5.

The protein localises to the membrane. Functionally, putative voltage-gated chloride channel. The polypeptide is Putative chloride channel-like protein CLC-g (CLC-G) (Arabidopsis thaliana (Mouse-ear cress)).